A 132-amino-acid polypeptide reads, in one-letter code: Large ribosomal subunit protein uL24 (132 aa).

The protein belongs to the universal ribosomal protein uL24 family. Part of the 50S ribosomal subunit.

Functionally, one of two assembly initiator proteins, it binds directly to the 5'-end of the 23S rRNA, where it nucleates assembly of the 50S subunit. Located at the polypeptide exit tunnel on the outside of the subunit. The protein is Large ribosomal subunit protein uL24 of Aeropyrum pernix (strain ATCC 700893 / DSM 11879 / JCM 9820 / NBRC 100138 / K1).